The primary structure comprises 1096 residues: Pentatricopeptide repeat-containing protein At5g55840 (1096 aa).

PPR repeat units lie at residues 122–156 (NPSV…GFNP), 157–191 (SVYT…KICP), 192–226 (DVAT…GYAP), 227–261 (TIVT…GVDA), 262–296 (DVCT…MIHP), 297–331 (NEVT…GLSP), 332–366 (NHVT…GLTP), 367–401 (SEVS…GVCV), 402–436 (GRIT…GIDP), 437–471 (DIVT…GLSP), 472–506 (NGII…GHTR), 507–541 (DHFT…GILP), 542–576 (NTVS…GHHP), 577–607 (TFFT…LHAV), 612–646 (DTVM…SILP), 647–681 (DSYT…GNVL), 683–717 (NKVM…GHTP), 718–752 (DIVT…NGGP), 753–787 (NLTT…GILP), 788–822 (DKLT…GVEV), 823–857 (DRYT…GISL), 858–892 (DKDT…GISP), 893–927 (ESRK…KICP), 928–962 (PNVA…KLVP), 963–997 (TIAS…GLKL), 998–1032 (DLVS…GFLA), and 1033–1068 (NATT…GFIT).

It belongs to the PPR family. P subfamily.

The chain is Pentatricopeptide repeat-containing protein At5g55840 from Arabidopsis thaliana (Mouse-ear cress).